An 814-amino-acid polypeptide reads, in one-letter code: Leucine-rich repeat-containing protein 41 (814 aa).

The interval 45-54 (ALFELCGRAV) is interaction with Elongin BC complex. Ser-155, Ser-276, and Ser-326 each carry phosphoserine. A disordered region spans residues 265 to 408 (LCGEASRGRA…KKGARTRQGC (144 aa)). Thr-327 is modified (phosphothreonine). Over residues 354-385 (TKRPPSAPATTSSASASSSTSSSKRAPASSAP) the composition is skewed to low complexity. Ser-375 bears the Phosphoserine mark. Residues 389–403 (PLKRFKRAAGKKGAR) show a composition bias toward basic residues. 7 LRR repeats span residues 489-509 (WVSL…IFRL), 520-532 (AGCR…LSDL), 533-557 (FSPL…VLSI), 615-637 (SGSL…FGLV), 638-661 (LQTL…LADC), 703-730 (NSTL…VFSE), and 733-754 (SSSL…LLEF).

As to quaternary structure, part of a E3 ubiquitin ligase complex with elongin BC complex (ELOB and ELOC), RBX1 and CUL5.

The chain is Leucine-rich repeat-containing protein 41 (LRRC41) from Bos taurus (Bovine).